The chain runs to 1145 residues: Protein STU1 (1145 aa).

2 HEAT repeats span residues T96–V134 and Y168–L206. 3 disordered regions span residues E226–T271, L510–P793, and P816–S839. The span at P229–A239 shows a compositional bias: low complexity. The span at S535–S545 shows a compositional bias: polar residues. Low complexity-rich tracts occupy residues T580–R594, A663–S676, and Q696–S708.

Belongs to the CLASP family. In terms of assembly, interacts with microtubules.

The protein localises to the cytoplasm. The protein resides in the cytoskeleton. It localises to the nucleus. Its subcellular location is the spindle. Its function is as follows. Microtubule binding protein that promotes the stabilization of dynamic microtubules. Required for mitotic spindle formation. This Gibberella zeae (strain ATCC MYA-4620 / CBS 123657 / FGSC 9075 / NRRL 31084 / PH-1) (Wheat head blight fungus) protein is Protein STU1 (STU1).